Consider the following 160-residue polypeptide: Cyclic pyranopterin monophosphate synthase (160 aa).

Residues 76–78 (LCH) and 114–115 (ME) contribute to the substrate site. Asp-129 is an active-site residue.

This sequence belongs to the MoaC family. As to quaternary structure, homohexamer; trimer of dimers.

The enzyme catalyses (8S)-3',8-cyclo-7,8-dihydroguanosine 5'-triphosphate = cyclic pyranopterin phosphate + diphosphate. The protein operates within cofactor biosynthesis; molybdopterin biosynthesis. Functionally, catalyzes the conversion of (8S)-3',8-cyclo-7,8-dihydroguanosine 5'-triphosphate to cyclic pyranopterin monophosphate (cPMP). This Saccharophagus degradans (strain 2-40 / ATCC 43961 / DSM 17024) protein is Cyclic pyranopterin monophosphate synthase.